A 497-amino-acid chain; its full sequence is E3 ubiquitin-protein ligase CBL-C (497 aa).

The segment at 7-145 (PQGWQWGEPR…SALFPEGKYC (139 aa)) is 4H. Residues 7–321 (PQGWQWGEPR…GKNHNPDLTE (315 aa)) form the Cbl-PTB domain. Positions 146–218 (GHLYQITKGS…FEFDIFTRLF (73 aa)) are EF-hand-like. Aspartate 199, threonine 201, and glutamate 210 together coordinate Ca(2+). The tract at residues 219-321 (QPWPTLLKNW…GKNHNPDLTE (103 aa)) is SH2-like. Residue arginine 264 participates in 4-O-phospho-L-tyrosine binding. Positions 322–350 (LCRAVLNQCIQVSQEQLQLYQAMNSTFEL) are linker. Residue tyrosine 341 is modified to Phosphotyrosine; by SRC. Residues 351-390 (CKICTERDKDVRIEPCGHLLCSCCLAAWQHSDSQTCPFCR) form an RING-type zinc finger. The interaction with RET stretch occupies residues 351–497 (CKICTERDKD…QVREGATESS (147 aa)).

As to quaternary structure, interacts with Ubiquitin-conjugating enzyme E2 UBE2D2 and UBE2D3. Interacts with EGFR (tyrosine phosphorylated). Interacts with the SH3 domain proteins LYN and CRK. Interacts (via RING-type zinc finger) with TGFB1I1 (via LIM zinc-binding domain 2); the interaction is direct and enhances the E3 activity. Interacts directly with RET (inactive) and CD2AP; dissociates from RET upon RET activation by GDNF which also increases the interaction with CD2AP suggesting dissociation as CBLC:CD2AP complex. Interacts with SRC; the interaction is enhanced when SRC is phosphorylated at 'Tyr-419'. Post-translationally, phosphorylated on multiple tyrosine residues by SRC. In terms of processing, autoubiquitinated, when phosphorylated at Tyr-341.

It catalyses the reaction S-ubiquitinyl-[E2 ubiquitin-conjugating enzyme]-L-cysteine + [acceptor protein]-L-lysine = [E2 ubiquitin-conjugating enzyme]-L-cysteine + N(6)-ubiquitinyl-[acceptor protein]-L-lysine.. Phosphorylation at Tyr-341 is necessary and sufficient for the activation of E3 activity. Acts as an E3 ubiquitin-protein ligase, which accepts ubiquitin from specific E2 ubiquitin-conjugating enzymes, and then transfers it to substrates promoting their degradation by the proteasome. Functionally coupled with the E2 ubiquitin-protein ligases UB2D1, UB2D2 and UB2D3. Regulator of EGFR mediated signal transduction; upon EGF activation, ubiquitinates EGFR. Inhibits EGF stimulated MAPK1 activation. Promotes ubiquitination of SRC phosphorylated at 'Tyr-419', has the highest ubiquitin ligase activity among CBL family proteins. In collaboration with CD2AP may act as regulatory checkpoint for Ret signaling by modulating the rate of RET degradation after ligand activation; CD2AP converts it from an inhibitor to a promoter of RET degradation; the function limits the potency of GDNF on neuronal survival. The chain is E3 ubiquitin-protein ligase CBL-C (Cblc) from Rattus norvegicus (Rat).